A 424-amino-acid chain; its full sequence is MYIKMATVANGQPDNSSLSSNPTGHMNGLTHSPGGAATIPMKDHDAIKLFIGQIPRNLDEKDLKPLFEEFGKIYELTVLKDRFTGMHKGCAFLTYCERESALKAQSALHEQKTLPGMNRPIQVKPADSESRGGCAFVKYSSHAEAQAAINALHGSQTMPGASSSLVVKFADTDKERTMRRMQQMAGQMGMFNPMAIQFGAYGAYAQALMQQQAAIMASVAQGGYLNPMAAFAAAQMQQMAALNMNGLAAAPMTPTSGGSTPPGITAPAVPSIPSPIGVNGFTGIPAQANGQPAAEAVFANGIHPYPAQSPTAADPLQQAYAGVQQYAAAYPAAYGQISQAFPQPPPMIPQQQREGPEGCNLFIYHLPQEFGDAELMQMFLPFGFVSFDNPASAQAAIQAMNGFQIGMKRLKVQLKRPKDANRPY.

The tract at residues 8–27 (VANGQPDNSSLSSNPTGHMN) is disordered. Over residues 9 to 24 (ANGQPDNSSLSSNPTG) the composition is skewed to polar residues. RRM domains follow at residues 47–128 (IKLF…PADS) and 342–417 (PQPP…LKRP).

Belongs to the CELF/BRUNOL family.

Its subcellular location is the nucleus. The protein localises to the cytoplasm. In terms of biological role, RNA-binding protein that may be implicated in the regulation of pre-mRNA alternative splicing. This chain is CUGBP Elav-like family member 4 (celf4), found in Xenopus tropicalis (Western clawed frog).